A 521-amino-acid polypeptide reads, in one-letter code: uncharacterized protein (521 aa).

An N-terminal signal peptide occupies residues 1 to 22; that stretch reads MGFKLKGFGFLTLFASQAFLTA. A lipid anchor (N-palmitoyl cysteine) is attached at C23. Residue C23 is the site of S-diacylglycerol cysteine attachment.

The protein belongs to the MG067/MG068/MG395 family.

It is found in the cell membrane. This is an uncharacterized protein from Mycoplasma pneumoniae (strain ATCC 29342 / M129 / Subtype 1) (Mycoplasmoides pneumoniae).